The chain runs to 309 residues: Protein CbbX (309 aa).

74–81 (GNPGTGKT) contacts ATP.

This sequence belongs to the CbxX/CfxQ family. In terms of assembly, forms homohexameric rings. The oligomeric transition is triggered by ribulose 1,5-biphosphate.

ATPase involved in the activation of red-type RuBisCo (ribulose-1,5-bisphosphate carboxylase/oxygenase), which tends to form inactive complexes with its substrate ribulose 1,5-bisphosphate (RuBP). Catalyzes the release of RuBP from inhibited RuBisCo in an ATP-dependent manner. Activation of RuBisCO involves the ATP-dependent carboxylation of the epsilon-amino group of lysine leading to a carbamate structure. This chain is Protein CbbX (cbbX), found in Cereibacter sphaeroides (Rhodobacter sphaeroides).